Here is a 510-residue protein sequence, read N- to C-terminus: Hyaluronidase PH-20 (510 aa).

The signal sequence occupies residues Met-1 to Thr-35. Intrachain disulfides connect Cys-60-Cys-351 and Cys-224-Cys-238. A glycan (N-linked (GlcNAc...) asparagine) is linked at Asn-82. The Proton donor role is filled by Glu-148. 4 N-linked (GlcNAc...) asparagine glycosylation sites follow: Asn-166, Asn-235, Asn-254, and Asn-368. Intrachain disulfides connect Cys-376/Cys-387, Cys-381/Cys-435, and Cys-437/Cys-464. N-linked (GlcNAc...) asparagine glycans are attached at residues Asn-393, Asn-440, and Asn-484. Residue Ser-491 is the site of GPI-anchor amidated serine attachment. Positions Thr-492–Leu-510 are cleaved as a propeptide — removed in mature form.

The protein belongs to the glycosyl hydrolase 56 family. In terms of tissue distribution, testis.

The protein resides in the cell membrane. It carries out the reaction Random hydrolysis of (1-&gt;4)-linkages between N-acetyl-beta-D-glucosamine and D-glucuronate residues in hyaluronate.. Its function is as follows. Involved in sperm-egg adhesion. Upon fertilization sperm must first penetrate a layer of cumulus cells that surrounds the egg before reaching the zona pellucida. The cumulus cells are embedded in a matrix containing hyaluronic acid which is formed prior to ovulation. This protein aids in penetrating the layer of cumulus cells by digesting hyaluronic acid. This Macaca fascicularis (Crab-eating macaque) protein is Hyaluronidase PH-20 (SPAM1).